Here is a 433-residue protein sequence, read N- to C-terminus: ATP-dependent protease ATPase subunit HslU (433 aa).

ATP is bound by residues Val18, 60-65, Asp246, Glu311, and Arg383; that span reads GVGKTE.

The protein belongs to the ClpX chaperone family. HslU subfamily. A double ring-shaped homohexamer of HslV is capped on each side by a ring-shaped HslU homohexamer. The assembly of the HslU/HslV complex is dependent on binding of ATP.

Its subcellular location is the cytoplasm. Functionally, ATPase subunit of a proteasome-like degradation complex; this subunit has chaperone activity. The binding of ATP and its subsequent hydrolysis by HslU are essential for unfolding of protein substrates subsequently hydrolyzed by HslV. HslU recognizes the N-terminal part of its protein substrates and unfolds these before they are guided to HslV for hydrolysis. The polypeptide is ATP-dependent protease ATPase subunit HslU (Rhodopseudomonas palustris (strain HaA2)).